The following is an 82-amino-acid chain: Small ribosomal subunit protein bS16 (82 aa).

The protein belongs to the bacterial ribosomal protein bS16 family.

In Vibrio atlanticus (strain LGP32) (Vibrio splendidus (strain Mel32)), this protein is Small ribosomal subunit protein bS16.